Reading from the N-terminus, the 117-residue chain is Large ribosomal subunit protein bL20 (117 aa).

Belongs to the bacterial ribosomal protein bL20 family.

Functionally, binds directly to 23S ribosomal RNA and is necessary for the in vitro assembly process of the 50S ribosomal subunit. It is not involved in the protein synthesizing functions of that subunit. This is Large ribosomal subunit protein bL20 from Limosilactobacillus fermentum (strain NBRC 3956 / LMG 18251) (Lactobacillus fermentum).